A 201-amino-acid chain; its full sequence is LexA repressor (201 aa).

The segment at residues 28 to 48 (LREIAAKLGISGTLGVMKHLE) is a DNA-binding region (H-T-H motif). Catalysis depends on for autocatalytic cleavage activity residues S120 and K157.

This sequence belongs to the peptidase S24 family. Homodimer.

The catalysed reaction is Hydrolysis of Ala-|-Gly bond in repressor LexA.. Its function is as follows. Represses a number of genes involved in the response to DNA damage (SOS response), including recA and lexA. In the presence of single-stranded DNA, RecA interacts with LexA causing an autocatalytic cleavage which disrupts the DNA-binding part of LexA, leading to derepression of the SOS regulon and eventually DNA repair. This chain is LexA repressor, found in Geobacter sp. (strain M21).